The primary structure comprises 542 residues: Coiled-coil domain-containing protein 60 (542 aa).

A coiled-coil region spans residues 70–97 (TMLQEETAFKKHQQHLKKLQEEELNKFQ). Disordered stretches follow at residues 228-284 (ATRK…EEEV) and 334-358 (QTTH…TQKK). Low complexity-rich tracts occupy residues 245–261 (SGGS…NPSS) and 342–351 (RSSTTSGESH).

In Rattus norvegicus (Rat), this protein is Coiled-coil domain-containing protein 60 (Ccdc60).